We begin with the raw amino-acid sequence, 215 residues long: Thymidylate kinase (215 aa).

7-14 (GMEGSGKS) contributes to the ATP binding site.

This sequence belongs to the thymidylate kinase family.

It catalyses the reaction dTMP + ATP = dTDP + ADP. Its function is as follows. Phosphorylation of dTMP to form dTDP in both de novo and salvage pathways of dTTP synthesis. The protein is Thymidylate kinase of Nitratidesulfovibrio vulgaris (strain DSM 19637 / Miyazaki F) (Desulfovibrio vulgaris).